The chain runs to 290 residues: Zinc finger matrin-type protein 3 (290 aa).

2 consecutive Matrin-type zinc fingers follow at residues 70 to 100 and 148 to 178; these read LFCK…KLRN and DYCK…RLRL. Disordered regions lie at residues 182–203 and 266–290; these read QSHS…EGSE and ESKQ…GYVQ. The segment at 246–276 adopts a Matrin-type 3 zinc-finger fold; it reads FYCSMCNVGAGEEVEFRQHLESKQHKSKVSE. The span at 266–283 shows a compositional bias: basic and acidic residues; it reads ESKQHKSKVSEQRYRSEM.

As to quaternary structure, interacts with dsRNA. In terms of tissue distribution, constitutively expressed in brain and testis. Also expressed in lung, kidney and spleen after whole body gamma irradiation.

The protein localises to the nucleus. It is found in the nucleolus. Acts as a bona fide target gene of p53/TP53. May play a role in the TP53-dependent growth regulatory pathway. May contribute to TP53-mediated apoptosis by regulation of TP53 expression and translocation to the nucleus and nucleolus. The chain is Zinc finger matrin-type protein 3 from Mus musculus (Mouse).